The following is a 1629-amino-acid chain: Ferredoxin-dependent glutamate synthase 2, chloroplastic (1629 aa).

Residues 1 to 107 constitute a chloroplast transit peptide; that stretch reads MALQSPGATG…LEDIISERGA (107 aa). The For GATase activity role is filled by Cys-108. The region spanning 108-507 is the Glutamine amidotransferase type-2 domain; it reads CGVGFIANLE…PGMMISVDLE (400 aa). 1186 to 1243 is a binding site for FMN; it reads LAETQKTLIGNGLRERVIIRVDGGFKSGVDVLIAAAMGADEYGFGTLAMIATGCIMAR. 3 residues coordinate [3Fe-4S] cluster: Cys-1239, Cys-1245, and Cys-1250. The tract at residues 1599–1629 is disordered; the sequence is SEEDTPEANSDHILKTTTGDEEQVSSTLAEK.

It belongs to the glutamate synthase family. The cofactor is [3Fe-4S] cluster. It depends on FAD as a cofactor. FMN serves as cofactor. Expressed predominantly in roots and slightly in leaves. Low expression in the leaf mesophyll and phloem companion cell-sieve element complex.

It localises to the plastid. The protein resides in the chloroplast stroma. It carries out the reaction 2 oxidized [2Fe-2S]-[ferredoxin] + 2 L-glutamate = L-glutamine + 2 reduced [2Fe-2S]-[ferredoxin] + 2-oxoglutarate + 2 H(+). It participates in amino-acid biosynthesis; L-glutamate biosynthesis via GLT pathway; L-glutamate from 2-oxoglutarate and L-glutamine (ferredoxin route): step 1/1. Its pathway is energy metabolism; nitrogen metabolism. May play a role in primary nitrogen assimilation in roots. Could supply a constitutive level of glutamate to maintain a basal level of protein synthesis. This is Ferredoxin-dependent glutamate synthase 2, chloroplastic (GLU2) from Arabidopsis thaliana (Mouse-ear cress).